The sequence spans 181 residues: Acireductone dioxygenase (181 aa).

Fe(2+) is bound by residues histidine 98, histidine 100, glutamate 104, and histidine 142. The Ni(2+) site is built by histidine 98, histidine 100, glutamate 104, and histidine 142.

Belongs to the acireductone dioxygenase (ARD) family. As to quaternary structure, monomer. It depends on Fe(2+) as a cofactor. Ni(2+) is required as a cofactor.

It carries out the reaction 1,2-dihydroxy-5-(methylsulfanyl)pent-1-en-3-one + O2 = 3-(methylsulfanyl)propanoate + CO + formate + 2 H(+). The enzyme catalyses 1,2-dihydroxy-5-(methylsulfanyl)pent-1-en-3-one + O2 = 4-methylsulfanyl-2-oxobutanoate + formate + 2 H(+). Its pathway is amino-acid biosynthesis; L-methionine biosynthesis via salvage pathway; L-methionine from S-methyl-5-thio-alpha-D-ribose 1-phosphate: step 5/6. Functionally, catalyzes 2 different reactions between oxygen and the acireductone 1,2-dihydroxy-3-keto-5-methylthiopentene (DHK-MTPene) depending upon the metal bound in the active site. Fe-containing acireductone dioxygenase (Fe-ARD) produces formate and 2-keto-4-methylthiobutyrate (KMTB), the alpha-ketoacid precursor of methionine in the methionine recycle pathway. Ni-containing acireductone dioxygenase (Ni-ARD) produces methylthiopropionate, carbon monoxide and formate, and does not lie on the methionine recycle pathway. The sequence is that of Acireductone dioxygenase from Synechococcus sp. (strain ATCC 27144 / PCC 6301 / SAUG 1402/1) (Anacystis nidulans).